The primary structure comprises 183 residues: Translation initiation factor IF-3 (183 aa).

It belongs to the IF-3 family. Monomer.

The protein resides in the cytoplasm. IF-3 binds to the 30S ribosomal subunit and shifts the equilibrium between 70S ribosomes and their 50S and 30S subunits in favor of the free subunits, thus enhancing the availability of 30S subunits on which protein synthesis initiation begins. This is Translation initiation factor IF-3 from Pseudomonas syringae pv. tomato (strain ATCC BAA-871 / DC3000).